A 970-amino-acid chain; its full sequence is uncharacterized protein (970 aa).

Residues 11–31 (WILKIGTILGLVCLGLFGVIF) form a helical membrane-spanning segment. The disordered stretch occupies residues 366–387 (ASNSNDNNNQNNNNNNNSSDVI). The span at 367–387 (SNSNDNNNQNNNNNNNSSDVI) shows a compositional bias: low complexity. 11 helical membrane-spanning segments follow: residues 515-535 (FASS…LLTL), 537-557 (YKLL…SSLV), 558-578 (IFSA…FFVI), 614-634 (FFAN…VIYL), 645-665 (LMAI…IVLI), 726-746 (FLFV…LYLV), 762-782 (SNGI…YCLI), 789-809 (CLSY…VMYL), 816-836 (IDQS…FFAA), 877-897 (IESS…FGGI), and 903-923 (LVIF…AFLP).

The protein resides in the cell membrane. This is an uncharacterized protein from Mycoplasma genitalium (strain ATCC 33530 / DSM 19775 / NCTC 10195 / G37) (Mycoplasmoides genitalium).